Consider the following 86-residue polypeptide: Small ribosomal subunit protein bS18 (86 aa).

This sequence belongs to the bacterial ribosomal protein bS18 family. As to quaternary structure, part of the 30S ribosomal subunit. Forms a tight heterodimer with protein bS6.

In terms of biological role, binds as a heterodimer with protein bS6 to the central domain of the 16S rRNA, where it helps stabilize the platform of the 30S subunit. The chain is Small ribosomal subunit protein bS18 from Campylobacter curvus (strain 525.92).